Consider the following 511-residue polypeptide: ADP,ATP carrier protein 4 (511 aa).

A run of 12 helical transmembrane segments spans residues 34–54 (VSKF…QNLI), 71–91 (ISFL…AIYV), 102–122 (IFYL…YVIF), 157–177 (FSLF…LLFW), 192–212 (FYPL…QFLE), 231–251 (FHTL…IIAI), 296–316 (LIAT…GPWK), 330–350 (AAFI…FVVL), 361–381 (FTAA…FFAV), 390–410 (LIIA…IGAI), 453–473 (LGKS…PSAS), and 476–496 (SISI…LWAT).

This sequence belongs to the ADP/ATP translocase tlc family.

It localises to the cell membrane. Functionally, provides the rickettsial cell with host ATP in exchange for rickettsial ADP. This is an obligate exchange system. This energy acquiring activity is an important component of rickettsial parasitism. The protein is ADP,ATP carrier protein 4 (tlcD) of Rickettsia felis (strain ATCC VR-1525 / URRWXCal2) (Rickettsia azadi).